The sequence spans 211 residues: Protein-lysine N-methyltransferase DDB_G0272708 (211 aa).

It belongs to the class I-like SAM-binding methyltransferase superfamily. EFM5 family.

Its subcellular location is the cytoplasm. S-adenosyl-L-methionine-dependent protein-lysine N-methyltransferase that methylates elongation factor 1-alpha. The polypeptide is Protein-lysine N-methyltransferase DDB_G0272708 (Dictyostelium discoideum (Social amoeba)).